We begin with the raw amino-acid sequence, 130 residues long: Protein BLT4 (130 aa).

Positions 1–25 are cleaved as a signal peptide; it reads MARTAATKLALVPLVAAMLLVAADA. The interval 80–130 is disordered; the sequence is VPARTTPAGPQASPPGAASASPTRSAPVSTALRSTDRTRAPHISSDRRLVG. Residues 84–110 show a composition bias toward low complexity; the sequence is TTPAGPQASPPGAASASPTRSAPVSTA. Basic and acidic residues predominate over residues 113–130; sequence STDRTRAPHISSDRRLVG.

This sequence belongs to the plant LTP family. As to expression, shoot meristem.

Possible dehydrative stress responsive protein. Not shown to have lipid transfer activity. In Hordeum vulgare (Barley), this protein is Protein BLT4 (BLT4).